We begin with the raw amino-acid sequence, 1012 residues long: Translation initiation factor IF-2, chloroplastic (1012 aa).

Residues 75–102 (GNSVSLDSNSNSSSSSKSGGDDGTGFVL) are compositionally biased toward low complexity. Disordered regions lie at residues 75–132 (GNSV…VEER), 147–294 (EKLG…KEKK), and 319–340 (APPK…RKKG). The segment covering 152–175 (SKVNGDKNNGSVNKPVRNNANASP) has biased composition (polar residues). The span at 183-194 (SAASLKSKTLKS) shows a compositional bias: low complexity. The span at 208–231 (VVKEVPKPSYNKNEEEKSQTRGGE) shows a compositional bias: basic and acidic residues. Over residues 240 to 257 (PQPPSKPQPLKPQQPSKP) the composition is skewed to pro residues. A compositionally biased stretch (basic and acidic residues) spans 277–294 (VLRDKGAAETSVKSKEKK). In terms of domain architecture, tr-type G spans 488–661 (DRPPVITIMG…MLVAELQELK (174 aa)). The G1 stretch occupies residues 497–504 (GHVDHGKT). 497–504 (GHVDHGKT) contacts GTP. The G2 stretch occupies residues 522-526 (GITQG). Positions 547–550 (DTPG) are G3. GTP contacts are provided by residues 547-551 (DTPGH) and 601-604 (NKID). A G4 region spans residues 601 to 604 (NKID). A G5 region spans residues 637–639 (SAL).

This sequence belongs to the TRAFAC class translation factor GTPase superfamily. Classic translation factor GTPase family. IF-2 subfamily.

The protein localises to the plastid. The protein resides in the chloroplast. In terms of biological role, one of the essential components for the initiation of protein synthesis. Protects formylmethionyl-tRNA from spontaneous hydrolysis and promotes its binding to the 30S ribosomal subunits. Also involved in the hydrolysis of GTP during the formation of the 70S ribosomal complex. The protein is Translation initiation factor IF-2, chloroplastic (IF2CP) of Phaseolus vulgaris (Kidney bean).